Consider the following 73-residue polypeptide: Toxin Td5 (73 aa).

The first 7 residues, 1–7, serve as a signal peptide directing secretion; sequence IGMVVEC. The LCN-type CS-alpha/beta domain maps to 8–70; the sequence is KDGYLVGNDG…IWNSATNRCR (63 aa). 4 cysteine pairs are disulfide-bonded: Cys18/Cys69, Cys22/Cys44, Cys30/Cys50, and Cys34/Cys52. Position 70 is an arginine amide (Arg70).

It belongs to the long (4 C-C) scorpion toxin superfamily. Sodium channel inhibitor family. Beta subfamily. In terms of tissue distribution, expressed by the venom gland.

The protein resides in the secreted. Its function is as follows. Beta toxins bind voltage-independently at site-4 of sodium channels (Nav) and shift the voltage of activation toward more negative potentials thereby affecting sodium channel activation and promoting spontaneous and repetitive firing. This Tityus discrepans (Venezuelan scorpion) protein is Toxin Td5.